Consider the following 188-residue polypeptide: PRA1 family protein 3 (188 aa).

The residue at position 1 (M1) is an N-acetylmethionine. At 1–35 the chain is on the cytoplasmic side; it reads MEVQVAPLRSWEDFFPGSDRFGRPDFKDISKWNNR. 2 helical membrane-spanning segments follow: residues 36-56 and 57-77; these read VVNN…AVVA and IVGF…ILVF. The Cytoplasmic portion of the chain corresponds to 78–93; that stretch reads LGFVWVSHNKDILRRM. Helical transmembrane passes span 94 to 114 and 115 to 135; these read KKQY…FLIS and YLGD…LMFI. Residues 136-188 lie on the Cytoplasmic side of the membrane; that stretch reads HASLRLRNIKNKLENKKEEIGLKKTPMGIILDALEQQEDNINKLASYIPKVKE. Residues 136–188 form a targeting to endoplasmic reticulum membrane region; it reads HASLRLRNIKNKLENKKEEIGLKKTPMGIILDALEQQEDNINKLASYIPKVKE.

It belongs to the PRA1 family. Binds to prenylated RAB and Ras superfamily members.

It is found in the endoplasmic reticulum membrane. The protein resides in the cell membrane. The protein localises to the cytoplasm. Its subcellular location is the cytoskeleton. In terms of biological role, regulates intracellular concentrations of taurine and glutamate. Negatively modulates SLC1A1/EAAC1 glutamate transport activity by decreasing its affinity for glutamate in a PKC activity-dependent manner. May be involved in membrane traffic. This chain is PRA1 family protein 3 (ARL6IP5), found in Gallus gallus (Chicken).